The primary structure comprises 166 residues: ATP synthase subunit b (166 aa).

Residues 7–27 (QFSLGLFILQIILFVGLILLL) traverse the membrane as a helical segment.

The protein belongs to the ATPase B chain family. In terms of assembly, F-type ATPases have 2 components, F(1) - the catalytic core - and F(0) - the membrane proton channel. F(1) has five subunits: alpha(3), beta(3), gamma(1), delta(1), epsilon(1). F(0) has three main subunits: a(1), b(2) and c(10-14). The alpha and beta chains form an alternating ring which encloses part of the gamma chain. F(1) is attached to F(0) by a central stalk formed by the gamma and epsilon chains, while a peripheral stalk is formed by the delta and b chains.

The protein localises to the cell inner membrane. F(1)F(0) ATP synthase produces ATP from ADP in the presence of a proton or sodium gradient. F-type ATPases consist of two structural domains, F(1) containing the extramembraneous catalytic core and F(0) containing the membrane proton channel, linked together by a central stalk and a peripheral stalk. During catalysis, ATP synthesis in the catalytic domain of F(1) is coupled via a rotary mechanism of the central stalk subunits to proton translocation. Its function is as follows. Component of the F(0) channel, it forms part of the peripheral stalk, linking F(1) to F(0). The sequence is that of ATP synthase subunit b from Flavobacterium psychrophilum (strain ATCC 49511 / DSM 21280 / CIP 103535 / JIP02/86).